A 1164-amino-acid chain; its full sequence is Nuclear exosome regulator NRDE2 (1164 aa).

Disordered regions lie at residues methionine 1–tryptophan 25 and leucine 39–phenylalanine 149. At alanine 2 the chain carries N-acetylalanine. Positions leucine 61–lysine 73 are enriched in basic and acidic residues. Residues leucine 61–leucine 383 are a coiled coil. Basic residues predominate over residues lysine 74–glycine 103. A compositionally biased stretch (basic and acidic residues) spans serine 110–glutamate 133. The MID/MTR4-interacting domain stretch occupies residues phenylalanine 163–threonine 266. The segment at threonine 279–alanine 305 is disordered. 5 HAT repeats span residues alanine 305–glutamate 337, tryptophan 395–serine 427, serine 758–leucine 792, tyrosine 978–lysine 1010, and glycine 1067–serine 1101.

It belongs to the NRDE2 family. Interacts with MTREX; the interaction is direct and stabilizes NRDE2. Interacts with EXOSC10, EFTUD2 and EIF4A3.

It is found in the nucleus speckle. Its subcellular location is the nucleus. The protein localises to the nucleolus. The protein resides in the nucleoplasm. Protein of the nuclear speckles that regulates RNA degradation and export from the nucleus through its interaction with MTREX an essential factor directing various RNAs to exosomal degradation. Changes the conformation of MTREX, precluding its association with the nuclear exosome and interaction with proteins required for its function in RNA exosomal degradation. Negatively regulates, for instance, the degradation of mRNAs and lncRNAs by inhibiting their MTREX-mediated recruitment to nuclear exosome. By preventing the degradation of RNAs in the nucleus, it promotes their export to the cytoplasm. U5 snRNP-associated RNA splicing factor which is required for efficient splicing of CEP131 pre-mRNA and plays an important role in centrosome maturation, integrity and function during mitosis. Suppresses intron retention in a subset of pre-mRNAs containing short, GC-rich introns with relatively weak 5' and 3' splice sites. Plays a role in DNA damage response. The polypeptide is Nuclear exosome regulator NRDE2 (Homo sapiens (Human)).